The sequence spans 346 residues: tRNA N6-adenosine threonylcarbamoyltransferase (346 aa).

Fe cation is bound by residues His111 and His115. Residues Leu134–Gly138, Asp167, Gly180, and Asn279 each bind substrate. Asp307 contributes to the Fe cation binding site.

The protein belongs to the KAE1 / TsaD family. Requires Fe(2+) as cofactor.

The protein resides in the cytoplasm. It carries out the reaction L-threonylcarbamoyladenylate + adenosine(37) in tRNA = N(6)-L-threonylcarbamoyladenosine(37) in tRNA + AMP + H(+). Required for the formation of a threonylcarbamoyl group on adenosine at position 37 (t(6)A37) in tRNAs that read codons beginning with adenine. Is involved in the transfer of the threonylcarbamoyl moiety of threonylcarbamoyl-AMP (TC-AMP) to the N6 group of A37, together with TsaE and TsaB. TsaD likely plays a direct catalytic role in this reaction. The protein is tRNA N6-adenosine threonylcarbamoyltransferase of Burkholderia pseudomallei (strain K96243).